Reading from the N-terminus, the 620-residue chain is UPF0313 protein BT_0254 (620 aa).

In terms of domain architecture, Radical SAM core spans 311 to 591; sequence AYDMIKFSVN…AQRQFFFWYK (281 aa). Cysteine 325, cysteine 329, and cysteine 332 together coordinate [4Fe-4S] cluster.

It belongs to the UPF0313 family. [4Fe-4S] cluster is required as a cofactor.

In Bacteroides thetaiotaomicron (strain ATCC 29148 / DSM 2079 / JCM 5827 / CCUG 10774 / NCTC 10582 / VPI-5482 / E50), this protein is UPF0313 protein BT_0254.